Here is a 216-residue protein sequence, read N- to C-terminus: Thiosulfate dehydrogenase electron acceptor (216 aa).

An N-terminal signal peptide occupies residues 1–22; the sequence is MKSIHWPLAGVAALLLSMQAQA. Cytochrome c domains lie at 23–108 and 118–210; these read ADGQ…EAMP and SEAA…ANVG. Heme c is bound by residues Cys-41, Cys-44, His-45, Cys-141, Cys-144, and His-145.

Binds 2 heme c groups covalently per subunit.

Acts as an electron acceptor for the thiosulfate dehydrogenase TsdA. This Stutzerimonas stutzeri (strain A1501) (Pseudomonas stutzeri) protein is Thiosulfate dehydrogenase electron acceptor (tsdB).